The chain runs to 568 residues: MASDSGTPPPPWEPTLSGSLPASTAIPLKRAALEEDFTPSVPSPLNPDVRSTPKPQGVDDMPAKRNKKESLKKRESKGAFGGDSNRGTPDPKHREPKQSDYSPMRYKLAPPKPSDFEPARPAVFTYHHDVPALDGGKIQFYETSEHVHNKKSYHYTHCIADPGFPSSLYYRGTEAEPHGPHLSFEDSATHLFFDQTGRHITTNKGFRMTRANVAIREGRFYWEVKITRGIVDKKNGEGQPESHGHVRMGFARREASVDAPVGFDAYSYGFRDVGGEKVYMSRPKPFFPEEEGIREGDVIGLEIQLPSERLQRKVLAGQYNPAVDTGLDDDSTAFDAPNIVRDRIPIRFKQHIYFEKIDYHTTKELEDLMNPSPVSSGPANSVEAPNPNHTVPALRTLPSSYIKVYKNGVLMGTPFTDLLAFLPPASKPQAQIGAREGLDNGMLGYYPAVSVFRGGAAEVNFGPDFWFPPPGIVEDPDNEVSMIDGGQDEPSKSYAFAYPGLDKIRPVSERYTEQIVEDIVYDIIDEVDFWIQDGCKVIDRFGQGEKAGHTGSLAASGRDEIKELVQDD.

Positions 1-113 (MASDSGTPPP…MRYKLAPPKP (113 aa)) are disordered. Basic and acidic residues-rich tracts occupy residues 68–77 (KESLKKRESK) and 89–98 (PDPKHREPKQ). In terms of domain architecture, B30.2/SPRY spans 160–353 (ADPGFPSSLY…IPIRFKQHIY (194 aa)).

It belongs to the cclA family. In terms of assembly, component of the COMPASS complex.

Its subcellular location is the nucleus. It is found in the chromosome. It localises to the telomere. In terms of biological role, component of the COMPASS (Set1C) complex that specifically mono-, di- and trimethylates histone H3 to form H3K4me1/2/3, which subsequently plays a role in telomere length maintenance and transcription elongation regulation. Controls the production of several secondary metabolites, including colletochlorins, higginsianins and sclerosporide. Plays a key role in mycelial growth, sporulation, spore germination and virulence. This is COMPASS component cclA from Colletotrichum higginsianum (strain IMI 349063) (Crucifer anthracnose fungus).